Here is a 283-residue protein sequence, read N- to C-terminus: Protoheme IX farnesyltransferase 1 (283 aa).

9 helical membrane-spanning segments follow: residues 14-34 (IALMIALTAITGYGAVATKVD), 35-55 (PVALLLLTLAMILGSAASAVF), 84-104 (LGFALAVVLMVAGMALANAAF), 107-127 (VVALHLFLGGFVYVAIYTVWL), 133-153 (TNIIIGGAAGSFAVLAGAAAV), 163-183 (VLALVLFLWTPSHFWSLAILL), 208-228 (ILANTVILVGASLLPWGLGLL), 231-251 (VYGFVAAVSGAVLLGFNVVLV), and 258-278 (WAGWNFAASMPYLLLLFIAVF).

The protein belongs to the UbiA prenyltransferase family. Protoheme IX farnesyltransferase subfamily.

It is found in the cell inner membrane. It catalyses the reaction heme b + (2E,6E)-farnesyl diphosphate + H2O = Fe(II)-heme o + diphosphate. The protein operates within porphyrin-containing compound metabolism; heme O biosynthesis; heme O from protoheme: step 1/1. In terms of biological role, converts heme B (protoheme IX) to heme O by substitution of the vinyl group on carbon 2 of heme B porphyrin ring with a hydroxyethyl farnesyl side group. The protein is Protoheme IX farnesyltransferase 1 of Paramagnetospirillum magneticum (strain ATCC 700264 / AMB-1) (Magnetospirillum magneticum).